A 204-amino-acid chain; its full sequence is Large ribosomal subunit protein bL25 (204 aa).

The tract at residues 1–20 (MSETYELKAETRDRVGKGSS) is disordered.

It belongs to the bacterial ribosomal protein bL25 family. CTC subfamily. In terms of assembly, part of the 50S ribosomal subunit; part of the 5S rRNA/L5/L18/L25 subcomplex. Contacts the 5S rRNA. Binds to the 5S rRNA independently of L5 and L18.

Functionally, this is one of the proteins that binds to the 5S RNA in the ribosome where it forms part of the central protuberance. The polypeptide is Large ribosomal subunit protein bL25 (Rhizobium meliloti (strain 1021) (Ensifer meliloti)).